Consider the following 297-residue polypeptide: 4-hydroxy-tetrahydrodipicolinate synthase (297 aa).

Residue threonine 49 participates in pyruvate binding. The Proton donor/acceptor role is filled by tyrosine 137. Lysine 166 (schiff-base intermediate with substrate) is an active-site residue. Isoleucine 208 is a pyruvate binding site.

This sequence belongs to the DapA family. As to quaternary structure, homotetramer; dimer of dimers.

It localises to the cytoplasm. It catalyses the reaction L-aspartate 4-semialdehyde + pyruvate = (2S,4S)-4-hydroxy-2,3,4,5-tetrahydrodipicolinate + H2O + H(+). It functions in the pathway amino-acid biosynthesis; L-lysine biosynthesis via DAP pathway; (S)-tetrahydrodipicolinate from L-aspartate: step 3/4. In terms of biological role, catalyzes the condensation of (S)-aspartate-beta-semialdehyde [(S)-ASA] and pyruvate to 4-hydroxy-tetrahydrodipicolinate (HTPA). The sequence is that of 4-hydroxy-tetrahydrodipicolinate synthase from Phocaeicola vulgatus (strain ATCC 8482 / DSM 1447 / JCM 5826 / CCUG 4940 / NBRC 14291 / NCTC 11154) (Bacteroides vulgatus).